The chain runs to 857 residues: MKVKETNSKPKLASRGTFQRKGIKIVGKWKQVTIDPNLFADGQMDDLVCFEELTDYRLVKNPSRLFSSEETKKRKAQAVSEEEEEEEGQSSSPKKKIKLKKQRDAARAAEGAAAQNEYEVKASEPEAQGEVTACSDQKVGGAKSESLAQAAPRKKKNKGKKKLDTFQSTSPKLPKKSKKTWMAEVHDQKADVSAWRDLFVPKAVLRALSFLGFSAPTPIQALTLAPAIRDKLDILGAAETGSGKTLAFAIPMIHSVLQWHKMKAPPIPRSTGMPPREMRFGATAHLGSPCKDRTESGVLPEEARIETEAQPSDSGVQATPETSASASAQTLLVCDDDAGEGPSSLEEKPVPKQNEDGEEKFDAEQAGKLKQELCDQIAIYKVHPRRPLLGLVLTPTRELAIQVRQHIDAVAKFTGINTAILVGGMSTQKQQRMLNRHPEIVIATPGRLWELVKEKHPHLSNLRQLRCLVIDEADRMVEKGHFAELSQLLEMLNDSQYNPSRQTLVFSATLTLVHQAPARILHKKHVKKMDKTDKLDLLMQKVGMRGKPKVIDLTRNEGTVETLTETKIHCETDEKDLYLYYFLMQYPGRSLVFANSISCIKRLSGLLKVLDVMPLTLHACMHQKQRLRNLEQFARLQDCVLLATDVAARGLDIPKVQHVIHYQVPRTSEIYIHRSGRTARAASEGLSLMLIGPEDVINFKKIYKTLQKDEDIPLFPVQSKYMDVVKERIRLARQIEKAEYRNFQACLHNSWIEQAAAALEIELEEEMYKGGKADQQEERRRQKQMKMLKQELRHLLSQPLFQENLKTRYPTQSGRPPQPVLASRNIESALSCLSRQKRRRKKPKEPRAPPQPGSSTS.

The disordered stretch occupies residues 61–179 (NPSRLFSSEE…SPKLPKKSKK (119 aa)). Phosphoserine is present on residues Ser80 and Ser92. The span at 152–161 (PRKKKNKGKK) shows a compositional bias: basic residues. Ser170 bears the Phosphoserine mark. The Q motif motif lies at 193-221 (SAWRDLFVPKAVLRALSFLGFSAPTPIQA). Residues 225 to 528 (APAIRDKLDI…RILHKKHVKK (304 aa)) form the Helicase ATP-binding domain. An ATP-binding site is contributed by 238 to 245 (AETGSGKT). Residues 279–363 (RFGATAHLGS…NEDGEEKFDA (85 aa)) form a disordered region. Phosphoserine is present on residues Ser288 and Ser296. Residues 290–307 (CKDRTESGVLPEEARIET) are compositionally biased toward basic and acidic residues. A compositionally biased stretch (polar residues) spans 309–330 (AQPSDSGVQATPETSASASAQT). Over residues 345-363 (LEEKPVPKQNEDGEEKFDA) the composition is skewed to basic and acidic residues. Residue Lys370 forms a Glycyl lysine isopeptide (Lys-Gly) (interchain with G-Cter in SUMO2) linkage. The short motif at 471-474 (DEAD) is the DEAD box element. One can recognise a Helicase C-terminal domain in the interval 576–723 (DLYLYYFLMQ…LFPVQSKYMD (148 aa)). Lys624 participates in a covalent cross-link: Glycyl lysine isopeptide (Lys-Gly) (interchain with G-Cter in SUMO2). The interval 808 to 857 (RYPTQSGRPPQPVLASRNIESALSCLSRQKRRRKKPKEPRAPPQPGSSTS) is disordered. A compositionally biased stretch (polar residues) spans 825-834 (NIESALSCLS). The span at 835-844 (RQKRRRKKPK) shows a compositional bias: basic residues. Residues 848 to 857 (APPQPGSSTS) are compositionally biased toward pro residues.

Belongs to the DEAD box helicase family. DDX24/MAK5 subfamily. In terms of assembly, interacts with FADD. Interacts with RIPK1; this interaction disrupts RLR signaling activation of IFN-dependent transcription factor IRF7. Interacts with NIP7. Interacts with EP300; this interaction prevents TP53 acetylation mediated by EP300. In terms of processing, ubiquitinated by MDM2 without targeting DDX24 for proteasomal degradation. Instead, polyubiquitylated DDX24 promotes interaction with NIP7, a component of pre-rRNP processing complex, and associates with pre-rRNA molecules and pre-ribosomal particles.

The protein resides in the cytoplasm. Its subcellular location is the nucleus. It catalyses the reaction ATP + H2O = ADP + phosphate + H(+). In terms of biological role, ATP-dependent RNA helicase that plays a role in various aspects of RNA metabolism including pre-mRNA splicing and is thereby involved in different biological processes such as cell cycle regulation or innate immunity. Plays an inhibitory role in TP53 transcriptional activity and subsequently in TP53 controlled cell growth arrest and senescence by inhibiting its EP300 mediated acetylation. Negatively regulates cytosolic RNA-mediated innate immune signaling at least in part by affecting RIPK1/IRF7 interactions. Alternatively, possesses antiviral activity by recognizing gammaherpesvirus transcripts in the context of lytic reactivation. Plays an essential role in cell cycle regulation in vascular smooth muscle cells by interacting with and regulating FANCA (Fanconi anemia complementation group A) mRNA. In Mus musculus (Mouse), this protein is ATP-dependent RNA helicase DDX24 (Ddx24).